Consider the following 809-residue polypeptide: Phenylalanine--tRNA ligase beta subunit (809 aa).

The tRNA-binding domain maps to 39–153 (APPFSQIVVG…EDTPVGADIR (115 aa)). The B5 domain maps to 404–479 (PKREPVRMRV…RIYGFEQIPA (76 aa)). The Mg(2+) site is built by Asp-457, Asp-463, Glu-466, and Glu-467. Positions 706–808 (PRVPAVTRDI…AGDAFGARLR (103 aa)) constitute an FDX-ACB domain.

This sequence belongs to the phenylalanyl-tRNA synthetase beta subunit family. Type 1 subfamily. In terms of assembly, tetramer of two alpha and two beta subunits. Mg(2+) serves as cofactor.

It localises to the cytoplasm. It carries out the reaction tRNA(Phe) + L-phenylalanine + ATP = L-phenylalanyl-tRNA(Phe) + AMP + diphosphate + H(+). This is Phenylalanine--tRNA ligase beta subunit from Ralstonia nicotianae (strain ATCC BAA-1114 / GMI1000) (Ralstonia solanacearum).